A 1407-amino-acid chain; its full sequence is MSPLLKSIIDIIEIFNQYASHDCDGAVLKKKDLKILLDREFGAVLQRPHDPETVDVMLELLDRDSDGLVGFDEFCLLIFKLAQAAYYALGQASGLDEEKRSHGEGKGRLLQNRRQEDQRRFELRDRQFEDEPERRRWQKQEQERELAEEEEQRKKRERFEQHYSRQYRDKEQRLQRQELEERRAEEEQLRRRKGRDAEEFIEEEQLRRREQQELKRELREEEQQRRERREQHERALQEEEEQLLRQRRWREEPREQQQLRRELEEIREREQRLEQEERREQQLRREQRLEQEERREQQLRRELEEIREREQRLEQEERREQRLEQEERREQQLKRELEEIREREQRLEQEERREQLLAEEVREQARERGESLTRRWQRQLESEAGARQSKVYSRPRRQEEQSLRQDQERRQRQERERELEEQARRQQQWQAEEESERRRQRLSARPSLRERQLRAEERQEQEQRFREEEEQRRERRQELQFLEEEEQLQRRERAQQLQEEDSFQEDRERRRRQQEQRPGQTWRWQLQEEAQRRRHTLYAKPGQQEQLREEEELQREKRRQEREREYREEEKLQREEDEKRRRQERERQYRELEELRQEEQLRDRKLREEEQLLQEREEERLRRQERERKLREEEQLLRQEEQELRQERERKLREEEQLLRREEQELRQERERKLREEEQLLQEREEERLRRQERARKLREEEQLLRQEEQELRQERERKLREEEQLLRREEQLLRQERDRKLREEEQLLQESEEERLRRQEREQQLRRERDRKFREEEQLLQEREEERLRRQERERKLREEEQLLQEREEERLRRQERERKLREEEQLLQEREEERLRRQERERKLREEEQLLRQEEQELRQERARKLREEEQLLRQEEQELRQERDRKLREEEQLLRQEEQELRQERDRKLREEEQLLQESEEERLRRQERERKLREEEQLLRREEQELRRERARKLREEEQLLQEREEERLRRQERARKLREEEQLLRREEQELRQERDRKFREEEQLLQEREEERLRRQERDRKFREEERQLRRQELEEQFRQERDRKFRLEEQIRQEKEEKQLRRQERDRKFREEEQQRRRQEREQQLRRERDRKFREEEQLLQEREEERLRRQERARKLREEEQLLRREEQLLRQERDRKFREEEQLLQESEEERLRRQERERKLREEEQLLQEREEERLRRQERARKLREEEQLLRQEEQELRQERARKLREEEQLLRQEEQELRQERDRKFREEEQLLRREEQELRRERDRKFREEEQLLQEREEERLRRQERARKLREEEEQLLFEEQEEQRLRQERDRRYRAEEQFAREEKSRRLERELRQEEEQRRRRERERKFREEQLRRQQEEEQRRRQLRERQFREDQSRRQVLEPGTRQFARVPVRSSPLYEYIQEQRSQYRP.

The interval 1-91 (MSPLLKSIID…AQAAYYALGQ (91 aa)) is S-100-like. EF-hand domains lie at 23–48 (CDGA…LQRP) and 49–84 (HDPE…LAQA). D32, D62, D64, D66, and E73 together coordinate Ca(2+). Disordered regions lie at residues 148-172 (EEEE…DKEQ), 218-237 (LREE…RALQ), 362-471 (REQA…EEEQ), 486-587 (EQLQ…ERER), 1014-1033 (REEE…EEER), 1062-1082 (KEEK…EEQQ), and 1313-1407 (EQFA…QYRP). Composition is skewed to basic and acidic residues over residues 362 to 381 (REQA…RQLE), 396 to 424 (RRQE…EQAR), 447 to 471 (SLRE…EEEQ), and 554 to 587 (QREK…ERER). Over residues 1313 to 1376 (EQFAREEKSR…FREDQSRRQV (64 aa)) the composition is skewed to basic and acidic residues.

Belongs to the S100-fused protein family. In terms of assembly, homodimer. Post-translationally, substrate of transglutaminase. Some 200 arginines are probably converted to citrullines by peptidylarginine deimidase. In terms of tissue distribution, found in the hard keratinizing tissues such as the inner root sheath (IRS) of hair follicles and medulla, and in the filiform papillae of dorsal tongue epithelium.

In terms of biological role, intermediate filament-associated protein that associates in regular arrays with keratin intermediate filaments (KIF) of the inner root sheath cells of the hair follicle and the granular layer of the epidermis. It later becomes cross-linked to KIF by isodipeptide bonds. It may serve as scaffold protein, together with involucrin, in the organization of the cell envelope or even anchor the cell envelope to the KIF network. It may be involved in its own calcium-dependent postsynthetic processing during terminal differentiation. In Oryctolagus cuniculus (Rabbit), this protein is Trichohyalin (TCHH).